The primary structure comprises 526 residues: Flavonoid 3'-monooxygenase CYP75B3 (526 aa).

Residues 6-26 form a helical membrane-spanning segment; it reads LPLLLGSLAVSAAVWYLVYFL. Residue Cys461 participates in heme binding.

This sequence belongs to the cytochrome P450 family. Heme is required as a cofactor.

Its subcellular location is the membrane. It catalyses the reaction a 3'-unsubstituted flavone + reduced [NADPH--hemoprotein reductase] + O2 = a 3'-hydroxyflavone + oxidized [NADPH--hemoprotein reductase] + H2O + H(+). The protein operates within secondary metabolite biosynthesis; flavonoid biosynthesis. In terms of biological role, catalyzes the 3'-hydroxylation of the flavonoid B-ring to the 3',4'-hydroxylated state. Catalyzes the 3'-hydroxylation of apigenin to generate luteolin. This is Flavonoid 3'-monooxygenase CYP75B3 from Oryza sativa subsp. japonica (Rice).